The primary structure comprises 939 residues: Isoleucine--tRNA ligase (939 aa).

Positions 59-69 (PYANGDIHIGH) match the 'HIGH' region motif. E570 provides a ligand contact to L-isoleucyl-5'-AMP. The short motif at 611–615 (KMSKS) is the 'KMSKS' region element. Position 614 (K614) interacts with ATP. Positions 902, 905, 922, and 925 each coordinate Zn(2+).

The protein belongs to the class-I aminoacyl-tRNA synthetase family. IleS type 1 subfamily. In terms of assembly, monomer. It depends on Zn(2+) as a cofactor.

The protein localises to the cytoplasm. It carries out the reaction tRNA(Ile) + L-isoleucine + ATP = L-isoleucyl-tRNA(Ile) + AMP + diphosphate. Functionally, catalyzes the attachment of isoleucine to tRNA(Ile). As IleRS can inadvertently accommodate and process structurally similar amino acids such as valine, to avoid such errors it has two additional distinct tRNA(Ile)-dependent editing activities. One activity is designated as 'pretransfer' editing and involves the hydrolysis of activated Val-AMP. The other activity is designated 'posttransfer' editing and involves deacylation of mischarged Val-tRNA(Ile). The chain is Isoleucine--tRNA ligase from Nitrosomonas europaea (strain ATCC 19718 / CIP 103999 / KCTC 2705 / NBRC 14298).